We begin with the raw amino-acid sequence, 355 residues long: 3-isopropylmalate dehydrogenase (355 aa).

NAD(+) is bound at residue 77–90; that stretch reads GAKWDNLPREKRPE. 4 residues coordinate substrate: Arg-97, Arg-107, Arg-135, and Asp-220. The Mg(2+) site is built by Asp-220, Asp-244, and Asp-248. 277-289 lines the NAD(+) pocket; that stretch reads GSAPDIAGQGIAN.

The protein belongs to the isocitrate and isopropylmalate dehydrogenases family. LeuB type 1 subfamily. Homodimer. It depends on Mg(2+) as a cofactor. The cofactor is Mn(2+).

It is found in the cytoplasm. It carries out the reaction (2R,3S)-3-isopropylmalate + NAD(+) = 4-methyl-2-oxopentanoate + CO2 + NADH. It functions in the pathway amino-acid biosynthesis; L-leucine biosynthesis; L-leucine from 3-methyl-2-oxobutanoate: step 3/4. Catalyzes the oxidation of 3-carboxy-2-hydroxy-4-methylpentanoate (3-isopropylmalate) to 3-carboxy-4-methyl-2-oxopentanoate. The product decarboxylates to 4-methyl-2 oxopentanoate. The protein is 3-isopropylmalate dehydrogenase of Sulfurimonas denitrificans (strain ATCC 33889 / DSM 1251) (Thiomicrospira denitrificans (strain ATCC 33889 / DSM 1251)).